We begin with the raw amino-acid sequence, 495 residues long: ATP synthase subunit beta, chloroplastic (495 aa).

Position 172 to 179 (172 to 179) interacts with ATP; sequence GGAGVGKT.

It belongs to the ATPase alpha/beta chains family. In terms of assembly, F-type ATPases have 2 components, CF(1) - the catalytic core - and CF(0) - the membrane proton channel. CF(1) has five subunits: alpha(3), beta(3), gamma(1), delta(1), epsilon(1). CF(0) has four main subunits: a(1), b(1), b'(1) and c(9-12).

It localises to the plastid. The protein resides in the chloroplast thylakoid membrane. The catalysed reaction is ATP + H2O + 4 H(+)(in) = ADP + phosphate + 5 H(+)(out). Produces ATP from ADP in the presence of a proton gradient across the membrane. The catalytic sites are hosted primarily by the beta subunits. This Hyacinthus orientalis (Common hyacinth) protein is ATP synthase subunit beta, chloroplastic.